A 240-amino-acid polypeptide reads, in one-letter code: Ribonuclease HII (240 aa).

The RNase H type-2 domain occupies Arg31–Ala222. 3 residues coordinate a divalent metal cation: Asp37, Glu38, and Asp130.

The protein belongs to the RNase HII family. The cofactor is Mn(2+). Mg(2+) is required as a cofactor.

The protein localises to the cytoplasm. The enzyme catalyses Endonucleolytic cleavage to 5'-phosphomonoester.. Functionally, endonuclease that specifically degrades the RNA of RNA-DNA hybrids. The sequence is that of Ribonuclease HII from Xanthomonas campestris pv. campestris (strain 8004).